The following is a 197-amino-acid chain: Protein RESISTANCE TO PHYTOPHTHORA 1, chloroplastic (197 aa).

The transit peptide at 1–52 (MSWSLCSTHGVSSSIALTYGFRHRRRSTFRIFATSDGLEPKDDPPESPLPSS) directs the protein to the chloroplast. Residues 35–56 (SDGLEPKDDPPESPLPSSSSAL) form a disordered region. 4 helical membrane-spanning segments follow: residues 93–113 (FEVQGYASMFLGGVLSFNLLF), 120–140 (LWRLMGMWSIWMFTIPSLRAR), 150–170 (LNYLFLIVPLLNVAIPFFWKS), and 173–193 (LVWSADTVAFFAMYAWKLGWL).

The protein resides in the plastid. It localises to the chloroplast. Its subcellular location is the membrane. Plays a positive role in the immune response to the oomycetes P.brassicae, including induced oxidative burst (e.g. H(2)O(2)) and enhanced expression of defense-related genes. The protein is Protein RESISTANCE TO PHYTOPHTHORA 1, chloroplastic of Arabidopsis thaliana (Mouse-ear cress).